A 343-amino-acid chain; its full sequence is Anthranilate phosphoribosyltransferase (343 aa).

5-phospho-alpha-D-ribose 1-diphosphate is bound by residues Gly-78, 81–82, Thr-86, 88–91, 106–114, and Ser-118; these read GD, NIST, and KHGNRSVSS. Gly-78 lines the anthranilate pocket. Ser-90 contributes to the Mg(2+) binding site. An anthranilate-binding site is contributed by Asn-109. Position 164 (Arg-164) interacts with anthranilate. Mg(2+) contacts are provided by Asp-223 and Glu-224.

This sequence belongs to the anthranilate phosphoribosyltransferase family. As to quaternary structure, homodimer. Mg(2+) is required as a cofactor.

It catalyses the reaction N-(5-phospho-beta-D-ribosyl)anthranilate + diphosphate = 5-phospho-alpha-D-ribose 1-diphosphate + anthranilate. It participates in amino-acid biosynthesis; L-tryptophan biosynthesis; L-tryptophan from chorismate: step 2/5. Its function is as follows. Catalyzes the transfer of the phosphoribosyl group of 5-phosphorylribose-1-pyrophosphate (PRPP) to anthranilate to yield N-(5'-phosphoribosyl)-anthranilate (PRA). The protein is Anthranilate phosphoribosyltransferase of Chlamydia felis (strain Fe/C-56) (Chlamydophila felis).